The chain runs to 236 residues: UPF0257 lipoprotein YnfC (236 aa).

An N-terminal signal peptide occupies residues 1–16; it reads MKYKLLPCLLAILLTG. A lipid anchor (N-palmitoyl cysteine) is attached at cysteine 17. Cysteine 17 is lipidated: S-diacylglycerol cysteine.

Belongs to the UPF0257 family.

It localises to the cell membrane. The sequence is that of UPF0257 lipoprotein YnfC from Escherichia coli O45:K1 (strain S88 / ExPEC).